A 112-amino-acid chain; its full sequence is Small ribosomal subunit protein bS6 (112 aa).

This sequence belongs to the bacterial ribosomal protein bS6 family.

Binds together with bS18 to 16S ribosomal RNA. This chain is Small ribosomal subunit protein bS6 (rpsF), found in Chlamydia muridarum (strain MoPn / Nigg).